A 560-amino-acid polypeptide reads, in one-letter code: CTP synthase (560 aa).

The segment at 1–272 (MSIGDVCSAR…DTQILSHFGM (272 aa)) is amidoligase domain. Residue Ser20 participates in CTP binding. Ser20 contributes to the UTP binding site. Residues 21-26 (SLGKGL) and Asp78 contribute to the ATP site. Residues Asp78 and Glu146 each contribute to the Mg(2+) site. CTP contacts are provided by residues 153–155 (DIE), 193–198 (KTKPTQ), and Lys229. UTP contacts are provided by residues 193–198 (KTKPTQ) and Lys229. The Glutamine amidotransferase type-1 domain occupies 297–539 (TIAIIGKYTK…VQNVLQIKQR (243 aa)). Gly356 contacts L-glutamine. Cys383 serves as the catalytic Nucleophile; for glutamine hydrolysis. L-glutamine is bound by residues 384-387 (MGMQ), Glu407, and Arg467. Residues His512 and Glu514 contribute to the active site.

This sequence belongs to the CTP synthase family. Homotetramer.

The enzyme catalyses UTP + L-glutamine + ATP + H2O = CTP + L-glutamate + ADP + phosphate + 2 H(+). The catalysed reaction is L-glutamine + H2O = L-glutamate + NH4(+). It catalyses the reaction UTP + NH4(+) + ATP = CTP + ADP + phosphate + 2 H(+). It participates in pyrimidine metabolism; CTP biosynthesis via de novo pathway; CTP from UDP: step 2/2. Allosterically activated by GTP, when glutamine is the substrate; GTP has no effect on the reaction when ammonia is the substrate. The allosteric effector GTP functions by stabilizing the protein conformation that binds the tetrahedral intermediate(s) formed during glutamine hydrolysis. Inhibited by the product CTP, via allosteric rather than competitive inhibition. Functionally, catalyzes the ATP-dependent amination of UTP to CTP with either L-glutamine or ammonia as the source of nitrogen. Regulates intracellular CTP levels through interactions with the four ribonucleotide triphosphates. The polypeptide is CTP synthase (Anaplasma marginale (strain Florida)).